Consider the following 132-residue polypeptide: Phosphoribosyl-AMP cyclohydrolase (132 aa).

Aspartate 82 provides a ligand contact to Mg(2+). Position 83 (cysteine 83) interacts with Zn(2+). Residues aspartate 84 and aspartate 86 each contribute to the Mg(2+) site. Residues cysteine 100 and cysteine 107 each coordinate Zn(2+).

The protein belongs to the PRA-CH family. Homodimer. Mg(2+) is required as a cofactor. The cofactor is Zn(2+).

The protein resides in the cytoplasm. It catalyses the reaction 1-(5-phospho-beta-D-ribosyl)-5'-AMP + H2O = 1-(5-phospho-beta-D-ribosyl)-5-[(5-phospho-beta-D-ribosylamino)methylideneamino]imidazole-4-carboxamide. The protein operates within amino-acid biosynthesis; L-histidine biosynthesis; L-histidine from 5-phospho-alpha-D-ribose 1-diphosphate: step 3/9. Catalyzes the hydrolysis of the adenine ring of phosphoribosyl-AMP. This chain is Phosphoribosyl-AMP cyclohydrolase, found in Dechloromonas aromatica (strain RCB).